The following is a 149-amino-acid chain: Urease accessory protein UreE (149 aa).

Belongs to the UreE family.

It localises to the cytoplasm. Involved in urease metallocenter assembly. Binds nickel. Probably functions as a nickel donor during metallocenter assembly. The polypeptide is Urease accessory protein UreE (Ureaplasma parvum serovar 3 (strain ATCC 700970)).